A 644-amino-acid polypeptide reads, in one-letter code: Chaperone protein DnaK (644 aa).

Threonine 195 carries the phosphothreonine; by autocatalysis modification. A disordered region spans residues 598–644 (KQAAPGAGAPGAGPGPEAAGGAQQAQAEPKKDEGVIDAEYVDVDEKK). Residues 612–624 (GPEAAGGAQQAQA) are compositionally biased toward low complexity. Acidic residues predominate over residues 632 to 644 (VIDAEYVDVDEKK).

The protein belongs to the heat shock protein 70 family.

Acts as a chaperone. In Koribacter versatilis (strain Ellin345), this protein is Chaperone protein DnaK.